The following is a 393-amino-acid chain: 1-deoxy-D-xylulose 5-phosphate reductoisomerase (393 aa).

Residues threonine 10, glycine 11, serine 12, isoleucine 13, arginine 37, and asparagine 124 each contribute to the NADPH site. Lysine 125 is a 1-deoxy-D-xylulose 5-phosphate binding site. Glutamate 126 is a binding site for NADPH. Residue aspartate 150 coordinates Mn(2+). Positions 151, 152, 182, and 205 each coordinate 1-deoxy-D-xylulose 5-phosphate. Mn(2+) is bound at residue glutamate 152. Position 211 (glycine 211) interacts with NADPH. 4 residues coordinate 1-deoxy-D-xylulose 5-phosphate: serine 218, asparagine 223, lysine 224, and glutamate 227. Glutamate 227 is a Mn(2+) binding site.

This sequence belongs to the DXR family. Mg(2+) serves as cofactor. The cofactor is Mn(2+).

The enzyme catalyses 2-C-methyl-D-erythritol 4-phosphate + NADP(+) = 1-deoxy-D-xylulose 5-phosphate + NADPH + H(+). It functions in the pathway isoprenoid biosynthesis; isopentenyl diphosphate biosynthesis via DXP pathway; isopentenyl diphosphate from 1-deoxy-D-xylulose 5-phosphate: step 1/6. Functionally, catalyzes the NADPH-dependent rearrangement and reduction of 1-deoxy-D-xylulose-5-phosphate (DXP) to 2-C-methyl-D-erythritol 4-phosphate (MEP). This chain is 1-deoxy-D-xylulose 5-phosphate reductoisomerase, found in Nitrosococcus oceani (strain ATCC 19707 / BCRC 17464 / JCM 30415 / NCIMB 11848 / C-107).